A 99-amino-acid chain; its full sequence is Osteocalcin (99 aa).

A signal peptide spans 1–23 (MRTLSLLTLLALTAFCLSDLAGA). Residues 24-49 (KPSDSESDKAFMSKQEGSKVVNRLRR) constitute a propeptide that is removed on maturation. The region spanning 50 to 96 (YLNNGLGAPAPYPDPLEPHREVCELNPNCDELADHIGFQDAYKRIYG) is the Gla domain. Proline 58 carries the post-translational modification Hydroxyproline. Ca(2+) contacts are provided by glutamate 66, glutamate 70, glutamate 73, and aspartate 79. 4-carboxyglutamate is present on residues glutamate 66, glutamate 70, and glutamate 73. Cysteines 72 and 78 form a disulfide.

The protein belongs to the osteocalcin/matrix Gla protein family. In terms of processing, gamma-carboxyglutamate residues are formed by vitamin K dependent carboxylation by GGCX. These residues are essential for the binding of calcium. Decarboxylation promotes the hormone activity.

Its subcellular location is the secreted. In terms of biological role, the carboxylated form is one of the main organic components of the bone matrix, which constitutes 1-2% of the total bone protein: it acts as a negative regulator of bone formation and is required to limit bone formation without impairing bone resorption or mineralization. The carboxylated form binds strongly to apatite and calcium. The uncarboxylated form acts as a hormone secreted by osteoblasts, which regulates different cellular processes, such as energy metabolism, male fertility and brain development. Regulates of energy metabolism by acting as a hormone favoring pancreatic beta-cell proliferation, insulin secretion and sensitivity and energy expenditure. Uncarboxylated osteocalcin hormone also promotes testosterone production in the testes: acts as a ligand for G protein-coupled receptor GPRC6A at the surface of Leydig cells, initiating a signaling response that promotes the expression of enzymes required for testosterone synthesis in a CREB-dependent manner. Also acts as a regulator of brain development: osteocalcin hormone crosses the blood-brain barrier and acts as a ligand for GPR158 on neurons, initiating a signaling response that prevents neuronal apoptosis in the hippocampus, favors the synthesis of all monoamine neurotransmitters and inhibits that of gamma-aminobutyric acid (GABA). Osteocalcin also crosses the placenta during pregnancy and maternal osteocalcin is required for fetal brain development. This chain is Osteocalcin (Bglap), found in Rattus norvegicus (Rat).